A 392-amino-acid polypeptide reads, in one-letter code: Ribosomal RNA large subunit methyltransferase G (392 aa).

This sequence belongs to the methyltransferase superfamily. RlmG family.

The protein localises to the cytoplasm. The catalysed reaction is guanosine(1835) in 23S rRNA + S-adenosyl-L-methionine = N(2)-methylguanosine(1835) in 23S rRNA + S-adenosyl-L-homocysteine + H(+). Functionally, specifically methylates the guanine in position 1835 (m2G1835) of 23S rRNA. This Colwellia psychrerythraea (strain 34H / ATCC BAA-681) (Vibrio psychroerythus) protein is Ribosomal RNA large subunit methyltransferase G.